Consider the following 100-residue polypeptide: Protein translation factor SUI1 homolog (100 aa).

The protein belongs to the SUI1 family.

The protein is Protein translation factor SUI1 homolog of Thermoplasma volcanium (strain ATCC 51530 / DSM 4299 / JCM 9571 / NBRC 15438 / GSS1).